Reading from the N-terminus, the 347-residue chain is MTSRVVSPEQNPNDAEMSLRPQSLDDFVGQRQVCENLKVFISAARARGEALDHVLFHGPPGLGKTTLAQIMARELGVGFRATSGPVIQRAGDLAALLTNLEPRDVLFIDEIHRLNPAIEEVLYPAMEDFQLDLIIGEGPAARSVRIELPPFTLVGATTRSGLLTTPLRERFGIPCRMNFYEPAELEAIVSRGARVLGFALTPDGAAEVARRSRGTPRVAGRLLRRVRDFAVVAGRSPVDALVADAALNRLEVDRIGLDAMDRRYLRCIAENYGGGPVGVETLAAALSESRDTLEEVVEPYLLQQGMIQRTPRGRMLSASGFKHIGLNPPKDLLVQLDLLTRMDEEGE.

Residues 1-180 (MTSRVVSPEQ…FGIPCRMNFY (180 aa)) form a large ATPase domain (RuvB-L) region. Residues Leu-19, Arg-20, Gly-61, Lys-64, Thr-65, Thr-66, 127–129 (EDF), Arg-170, Tyr-180, and Arg-217 each bind ATP. Thr-65 lines the Mg(2+) pocket. The segment at 181–251 (EPAELEAIVS…VADAALNRLE (71 aa)) is small ATPAse domain (RuvB-S). A head domain (RuvB-H) region spans residues 254 to 347 (RIGLDAMDRR…LLTRMDEEGE (94 aa)). DNA is bound by residues Arg-290, Arg-309, and Arg-314.

The protein belongs to the RuvB family. As to quaternary structure, homohexamer. Forms an RuvA(8)-RuvB(12)-Holliday junction (HJ) complex. HJ DNA is sandwiched between 2 RuvA tetramers; dsDNA enters through RuvA and exits via RuvB. An RuvB hexamer assembles on each DNA strand where it exits the tetramer. Each RuvB hexamer is contacted by two RuvA subunits (via domain III) on 2 adjacent RuvB subunits; this complex drives branch migration. In the full resolvosome a probable DNA-RuvA(4)-RuvB(12)-RuvC(2) complex forms which resolves the HJ.

It is found in the cytoplasm. The catalysed reaction is ATP + H2O = ADP + phosphate + H(+). In terms of biological role, the RuvA-RuvB-RuvC complex processes Holliday junction (HJ) DNA during genetic recombination and DNA repair, while the RuvA-RuvB complex plays an important role in the rescue of blocked DNA replication forks via replication fork reversal (RFR). RuvA specifically binds to HJ cruciform DNA, conferring on it an open structure. The RuvB hexamer acts as an ATP-dependent pump, pulling dsDNA into and through the RuvAB complex. RuvB forms 2 homohexamers on either side of HJ DNA bound by 1 or 2 RuvA tetramers; 4 subunits per hexamer contact DNA at a time. Coordinated motions by a converter formed by DNA-disengaged RuvB subunits stimulates ATP hydrolysis and nucleotide exchange. Immobilization of the converter enables RuvB to convert the ATP-contained energy into a lever motion, pulling 2 nucleotides of DNA out of the RuvA tetramer per ATP hydrolyzed, thus driving DNA branch migration. The RuvB motors rotate together with the DNA substrate, which together with the progressing nucleotide cycle form the mechanistic basis for DNA recombination by continuous HJ branch migration. Branch migration allows RuvC to scan DNA until it finds its consensus sequence, where it cleaves and resolves cruciform DNA. This Paramagnetospirillum magneticum (strain ATCC 700264 / AMB-1) (Magnetospirillum magneticum) protein is Holliday junction branch migration complex subunit RuvB.